An 83-amino-acid chain; its full sequence is Small ribosomal subunit protein bS16 (83 aa).

Belongs to the bacterial ribosomal protein bS16 family.

This Shewanella woodyi (strain ATCC 51908 / MS32) protein is Small ribosomal subunit protein bS16.